The chain runs to 1619 residues: ATP-dependent helicase ULS1 (1619 aa).

The SUMO interacting motif; type a 1 signature appears at I7 to T10. A compositionally biased stretch (polar residues) spans S86–V102. Disordered stretches follow at residues S86–S123, N200–S279, P347–I371, and S429–Q450. Basic and acidic residues predominate over residues L103–Q118. S121 is subject to Phosphoserine. Residues N200–D210 show a composition bias toward polar residues. Positions P211–I226 are enriched in basic and acidic residues. Polar residues-rich tracts occupy residues S242–N259 and L269–S279. The span at N353–Q366 shows a compositional bias: basic and acidic residues. The short motif at I371 to D378 is the SUMO interacting motif; type b 1 element. Positions L470–L473 match the SUMO interacting motif; type a 2 motif. Positions I543–N550 match the SUMO interacting motif; type b 2 motif. Residues Q956–P1157 enclose the Helicase ATP-binding domain. D969–T976 is a binding site for ATP. An RING-type zinc finger spans residues C1330–Q1386. One can recognise a Helicase C-terminal domain in the interval Q1447–G1606.

It belongs to the SNF2/RAD54 helicase family. As to quaternary structure, interacts with CDC3, CDC11, EBP2, SIR4, UBC4 and SUMO/SMT3.

Its subcellular location is the nucleus. In terms of biological role, ATP-dependent helicase involved mating type switching and in silencing interference through its interaction with the silencing regulator SIR4. Cooperates with UBC4 and UBC5 to mediate ubiquitination of SUMO conjugates. This chain is ATP-dependent helicase ULS1 (ULS1), found in Saccharomyces cerevisiae (strain ATCC 204508 / S288c) (Baker's yeast).